Consider the following 102-residue polypeptide: Small ribosomal subunit protein uS10 (102 aa).

The protein belongs to the universal ribosomal protein uS10 family. Part of the 30S ribosomal subunit.

Functionally, involved in the binding of tRNA to the ribosomes. The polypeptide is Small ribosomal subunit protein uS10 (Syntrophus aciditrophicus (strain SB)).